Reading from the N-terminus, the 247-residue chain is Exosome complex component Rrp4 (247 aa).

The S1 motif domain maps to 75–148 (DDLVIGIVEN…RDPVITVKGK (74 aa)). Residues 154 to 220 (TEGVVVDVKP…QAIKLIELKA (67 aa)) enclose the KH domain.

It belongs to the RRP4 family. In terms of assembly, component of the archaeal exosome complex. Forms a trimer of Rrp4 and/or Csl4 subunits. The trimer associates with a hexameric ring-like arrangement composed of 3 Rrp41-Rrp42 heterodimers.

The protein resides in the cytoplasm. Functionally, non-catalytic component of the exosome, which is a complex involved in RNA degradation. Increases the RNA binding and the efficiency of RNA degradation. Confers strong poly(A) specificity to the exosome. The chain is Exosome complex component Rrp4 from Thermosphaera aggregans (strain DSM 11486 / M11TL).